The chain runs to 458 residues: RuvB-like helicase 1 (458 aa).

The segment at 1-29 (MVQISEVKGNSRDNRTAAHTHIKGLGLRP) is disordered. Residue 71 to 78 (GGPGTGKT) coordinates ATP.

It belongs to the RuvB family. May form heterododecamers with RVB2. Component of the SWR1 chromatin remodeling complex, the INO80 chromatin remodeling complex, and of the R2TP complex.

The protein localises to the nucleus. The enzyme catalyses ATP + H2O = ADP + phosphate + H(+). In terms of biological role, DNA helicase which participates in several chromatin remodeling complexes, including the SWR1 and the INO80 complexes. The SWR1 complex mediates the ATP-dependent exchange of histone H2A for the H2A variant HZT1 leading to transcriptional regulation of selected genes by chromatin remodeling. The INO80 complex remodels chromatin by shifting nucleosomes and is involved in DNA repair. Also involved in pre-rRNA processing. In Emericella nidulans (strain FGSC A4 / ATCC 38163 / CBS 112.46 / NRRL 194 / M139) (Aspergillus nidulans), this protein is RuvB-like helicase 1 (rvb1).